Reading from the N-terminus, the 250-residue chain is uncharacterized protein (250 aa).

The chain crosses the membrane as a helical span at residues F4–D24.

It is found in the membrane. This is an uncharacterized protein from Methanocaldococcus jannaschii (strain ATCC 43067 / DSM 2661 / JAL-1 / JCM 10045 / NBRC 100440) (Methanococcus jannaschii).